We begin with the raw amino-acid sequence, 167 residues long: NAD(P)H-quinone oxidoreductase subunit I, chloroplastic (167 aa).

2 consecutive 4Fe-4S ferredoxin-type domains span residues 55-84 and 95-124; these read GRIHFEFDKCIACEVCVRVCPIDLPVVDWK and LNYSIDFGICIFCGNCVEYCPTNCLSMTEE. 8 residues coordinate [4Fe-4S] cluster: cysteine 64, cysteine 67, cysteine 70, cysteine 74, cysteine 104, cysteine 107, cysteine 110, and cysteine 114.

The protein belongs to the complex I 23 kDa subunit family. In terms of assembly, NDH is composed of at least 16 different subunits, 5 of which are encoded in the nucleus. [4Fe-4S] cluster serves as cofactor.

It localises to the plastid. Its subcellular location is the chloroplast thylakoid membrane. It catalyses the reaction a plastoquinone + NADH + (n+1) H(+)(in) = a plastoquinol + NAD(+) + n H(+)(out). The enzyme catalyses a plastoquinone + NADPH + (n+1) H(+)(in) = a plastoquinol + NADP(+) + n H(+)(out). NDH shuttles electrons from NAD(P)H:plastoquinone, via FMN and iron-sulfur (Fe-S) centers, to quinones in the photosynthetic chain and possibly in a chloroplast respiratory chain. The immediate electron acceptor for the enzyme in this species is believed to be plastoquinone. Couples the redox reaction to proton translocation, and thus conserves the redox energy in a proton gradient. The sequence is that of NAD(P)H-quinone oxidoreductase subunit I, chloroplastic from Barbarea verna (Land cress).